A 285-amino-acid polypeptide reads, in one-letter code: Probable endonuclease 4 (285 aa).

His-69, His-109, Glu-145, Asp-179, His-182, His-216, Asp-229, His-231, and Glu-261 together coordinate Zn(2+).

Belongs to the AP endonuclease 2 family. Zn(2+) is required as a cofactor.

The enzyme catalyses Endonucleolytic cleavage to 5'-phosphooligonucleotide end-products.. Endonuclease IV plays a role in DNA repair. It cleaves phosphodiester bonds at apurinic or apyrimidinic (AP) sites, generating a 3'-hydroxyl group and a 5'-terminal sugar phosphate. The protein is Probable endonuclease 4 of Shigella sonnei (strain Ss046).